The following is a 431-amino-acid chain: O-methyltransferase gliM (431 aa).

Residues 20-85 (EFKAIVNDLR…SMDKLQLQLV (66 aa)) adopt a coiled-coil conformation. S-adenosyl-L-methionine is bound by residues aspartate 287 and 319–321 (GDF). The active-site Proton acceptor is the histidine 338.

This sequence belongs to the class I-like SAM-binding methyltransferase superfamily. Cation-independent O-methyltransferase family. COMT subfamily.

The protein operates within mycotoxin biosynthesis. Functionally, O-methyltransferase; part of the gene cluster that mediates the biosynthesis of gliotoxin, a member of the epipolythiodioxopiperazine (ETP) class of toxins characterized by a disulfide bridged cyclic dipeptide. The first step in gliotoxin biosynthesis is the condensation of serine and phenylalanine to form the cyclo-L-phenylalanyl-L-serine diketopiperazine (DKP) by the NRPS gliP. GliP is also able to produce the DKP cyclo-L-tryptophanyl-L-serine, suggesting that the substrate specificity of the first adenylation (A) domain in gliP is sufficiently relaxed to accommodate both L-Phe and L-Trp. The cytochrome P450 monooxygenase gliC has been shown to catalyze the subsequent hydroxylation of the alpha-carbon of L-Phe in cyclo-L-phenylalanyl-L-serine whereas the second cytochrome P450 enzyme, gliF, is presumably involved in the modification of the DKP side chain. The glutathione S-transferase (GST) gliG then forms a bis-glutathionylated biosynthetic intermediate which is responsible for the sulfurization of gliotoxin. This bis-glutathionylated intermediate is subsequently processed by the gamma-glutamyl cyclotransferase gliK to remove both gamma-glutamyl moieties. Subsequent processing via gliI yields a biosynthetic intermediate, which is N-methylated via the N-methyltransferase gliN, before the gliotoxin oxidoreductase gliT-mediated disulfide bridge closure. GliN-mediated amide methylation confers stability to ETP, damping the spontaneous formation of tri- and tetrasulfides. Intracellular dithiol gliotoxin oxidized by gliT is subsequently effluxed by gliA. Gliotoxin contributes to pathogenesis during invasive aspergillosis. In macrophages and neutrophils, gliotoxin showed inhibition of various different cell functions including cytokine production, antigen presentation, phagocytosis, and production of reactive oxygen species. The sequence is that of O-methyltransferase gliM from Aspergillus fumigatus (strain ATCC MYA-4609 / CBS 101355 / FGSC A1100 / Af293) (Neosartorya fumigata).